The chain runs to 920 residues: Isoleucine--tRNA ligase (920 aa).

The 'HIGH' region signature appears at 58 to 68 (PYANGHLHLGH). Glu569 is a binding site for L-isoleucyl-5'-AMP. Residues 610–614 (KMSKS) carry the 'KMSKS' region motif. Lys613 serves as a coordination point for ATP. Cys895, Cys898, Cys910, and Cys913 together coordinate Zn(2+).

It belongs to the class-I aminoacyl-tRNA synthetase family. IleS type 1 subfamily. As to quaternary structure, monomer. Zn(2+) serves as cofactor.

It is found in the cytoplasm. The catalysed reaction is tRNA(Ile) + L-isoleucine + ATP = L-isoleucyl-tRNA(Ile) + AMP + diphosphate. Functionally, catalyzes the attachment of isoleucine to tRNA(Ile). As IleRS can inadvertently accommodate and process structurally similar amino acids such as valine, to avoid such errors it has two additional distinct tRNA(Ile)-dependent editing activities. One activity is designated as 'pretransfer' editing and involves the hydrolysis of activated Val-AMP. The other activity is designated 'posttransfer' editing and involves deacylation of mischarged Val-tRNA(Ile). This is Isoleucine--tRNA ligase from Helicobacter pylori (strain Shi470).